We begin with the raw amino-acid sequence, 605 residues long: IQ domain-containing protein IQM2 (605 aa).

Positions 105 to 134 (KHEAAIKLQKVYKSFRTRRKLADCAVLVEQ) constitute an IQ domain. The segment at 408 to 505 (QDKVDPSGEE…EEGETKESEV (98 aa)) is disordered. Positions 425-440 (SISRKQSDLETPEKME) are enriched in basic and acidic residues. Acidic residues predominate over residues 462-480 (DYDSGDDEEEEEEMFELEQ). Positions 481 to 490 (ESMPSEQSSP) are enriched in low complexity. Basic and acidic residues predominate over residues 491–505 (RGEEKEEGETKESEV).

Expressed in rosette and cauline leaves, stems, flowers and siliques, and at lower levels in roots.

The protein localises to the cytoplasm. It localises to the nucleus. Its function is as follows. May be involved in biotic and abiotic stress responses. The polypeptide is IQ domain-containing protein IQM2 (Arabidopsis thaliana (Mouse-ear cress)).